We begin with the raw amino-acid sequence, 200 residues long: Recombination protein RecR (200 aa).

The C4-type zinc finger occupies 59-74; that stretch reads CDICGNVCESSPCPVC. Positions 82–177 constitute a Toprim domain; sequence SVICVVEEPK…KVTRLASGLP (96 aa).

It belongs to the RecR family.

Its function is as follows. May play a role in DNA repair. It seems to be involved in an RecBC-independent recombinational process of DNA repair. It may act with RecF and RecO. This is Recombination protein RecR from Bifidobacterium longum subsp. infantis (strain ATCC 15697 / DSM 20088 / JCM 1222 / NCTC 11817 / S12).